Consider the following 150-residue polypeptide: 6,7-dimethyl-8-ribityllumazine synthase (150 aa).

5-amino-6-(D-ribitylamino)uracil-binding positions include phenylalanine 11, 43 to 45 (VYD), and 67 to 69 (AVI). 72-73 (AT) contacts (2S)-2-hydroxy-3-oxobutyl phosphate. Histidine 75 acts as the Proton donor in catalysis. Residue leucine 100 coordinates 5-amino-6-(D-ribitylamino)uracil. Arginine 115 contacts (2S)-2-hydroxy-3-oxobutyl phosphate.

This sequence belongs to the DMRL synthase family.

It catalyses the reaction (2S)-2-hydroxy-3-oxobutyl phosphate + 5-amino-6-(D-ribitylamino)uracil = 6,7-dimethyl-8-(1-D-ribityl)lumazine + phosphate + 2 H2O + H(+). The protein operates within cofactor biosynthesis; riboflavin biosynthesis; riboflavin from 2-hydroxy-3-oxobutyl phosphate and 5-amino-6-(D-ribitylamino)uracil: step 1/2. Functionally, catalyzes the formation of 6,7-dimethyl-8-ribityllumazine by condensation of 5-amino-6-(D-ribitylamino)uracil with 3,4-dihydroxy-2-butanone 4-phosphate. This is the penultimate step in the biosynthesis of riboflavin. The sequence is that of 6,7-dimethyl-8-ribityllumazine synthase from Pyrobaculum neutrophilum (strain DSM 2338 / JCM 9278 / NBRC 100436 / V24Sta) (Thermoproteus neutrophilus).